The following is a 403-amino-acid chain: Peroxisomal membrane protein PEX13 (403 aa).

Residues 1–11 (MASQPPPPPKP) show a composition bias toward pro residues. The interval 1–69 (MASQPPPPPK…SQQTGGNNVN (69 aa)) is disordered. Over 1–134 (MASQPPPPPK…SSRGAFQSIE (134 aa)) the chain is Peroxisomal matrix. The span at 59–69 (PSQQTGGNNVN) shows a compositional bias: polar residues. A helical membrane pass occupies residues 135–155 (SIVHAFASVSMMMDATFSAVY). Residues 145–233 (MMMDATFSAV…EDQANNSAKS (89 aa)) form a targeting to peroxisomes region. Residues 156–174 (NSFRAVLDVANHFSRLKIH) are Cytoplasmic-facing. Residues 175-192 (FTKVFSAFALVRTIRYLY) traverse the membrane as a helical segment. The segment at 175-196 (FTKVFSAFALVRTIRYLYRRLQ) is interaction with PEX19. Residues 193–233 (RRLQWMMGLRRGSENEDLWAESEGTVACLGAEDQANNSAKS) lie on the Peroxisomal matrix side of the membrane. Residues 234–254 (WPIFLFFAVILGGPYLIWKLL) form a helical membrane-spanning segment. The Cytoplasmic portion of the chain corresponds to 255-403 (STHSDEVTDS…TGKNGDKQDL (149 aa)). The SH3 domain occupies 272-336 (DDHVVARAEY…PANYVKILGK (65 aa)). Disordered stretches follow at residues 341 to 364 (KTVE…VKGV) and 381 to 403 (FVET…KQDL). Residues 344-364 (ESSTMPKQQQSFTNPTSVKGV) show a composition bias toward polar residues.

Belongs to the peroxin-13 family. In terms of assembly, interacts (via SH3 domain) with PEX14 (via SH3-binding motif); forming the PEX13-PEX14 docking complex. Interacts with PEX19.

It localises to the peroxisome membrane. Its function is as follows. Component of the PEX13-PEX14 docking complex, a translocon channel that specifically mediates the import of peroxisomal cargo proteins bound to PEX5 receptor. The PEX13-PEX14 docking complex forms a large import pore which can be opened to a diameter of about 9 nm. Mechanistically, PEX5 receptor along with cargo proteins associates with the PEX14 subunit of the PEX13-PEX14 docking complex in the cytosol, leading to the insertion of the receptor into the organelle membrane with the concomitant translocation of the cargo into the peroxisome matrix. Involved in the import of PTS1- and PTS2-type containing proteins. This Rattus norvegicus (Rat) protein is Peroxisomal membrane protein PEX13.